The sequence spans 623 residues: Protein vein (623 aa).

The first 40 residues, 1-40 (MYAQHLRKWSLKTKKQLMPLILLIISYMLLLNTCVLSSSA), serve as a signal peptide directing secretion. 4 disordered regions span residues 70–98 (IPLS…SSNN), 130–162 (DAGS…SMQK), 184–214 (AASS…NYSS), and 229–317 (PESM…QRYN). Composition is skewed to low complexity over residues 72–98 (LSSD…SSNN) and 136–158 (PAQQ…QQQQ). Residue asparagine 76 is glycosylated (N-linked (GlcNAc...) asparagine). Asparagine 211 carries an N-linked (GlcNAc...) asparagine glycan. The segment covering 233–248 (LEDRSPEQAARSRRDG) has biased composition (basic and acidic residues). Asparagine 252 carries an N-linked (GlcNAc...) asparagine glycan. Residues 255-267 (RQQQRTGHRQQLQ) are compositionally biased toward low complexity. A compositionally biased stretch (basic residues) spans 305-316 (QRRKHQRKHQRY). 6 N-linked (GlcNAc...) asparagine glycosylation sites follow: asparagine 350, asparagine 381, asparagine 424, asparagine 449, asparagine 521, and asparagine 574. Positions 457-542 (TKIFSKPSKA…AKNKASKAIA (86 aa)) constitute an Ig-like C2-type domain. Disulfide bonds link cysteine 478/cysteine 531, cysteine 566/cysteine 577, cysteine 571/cysteine 588, and cysteine 590/cysteine 599. Positions 561–599 (ASGIPCNFDYCFHNGTCRMIPDINEVYCRCPTEYFGNRC) constitute an EGF-like domain.

Its subcellular location is the secreted. Functionally, ligand for the EGF receptor. Seems to play a role in the global proliferation of wing disc cells and the larval patterning. Shows a strong synergistic genetic interaction with spi, suggesting a molecular interdependence. Required for the development of interveins cells. This Drosophila melanogaster (Fruit fly) protein is Protein vein (vn).